The following is a 209-amino-acid chain: MKLRGLYAITDSQLLDDGRLLPYVEAALRGGARLLQYRDKSSDQARRLREAESLRELCERYGAQLIVNDDAELAARLGVGLHLGQTDGSLSAARALLGRQAIIGATCHARLELAEQAVAEGASYVAFGRFFNSSTKPGAPAASVELLDQARPRLHLPITAIGGISLDTAPGLIARGVDLVAVIHALFAAASAAEVERRARAFSALFEPA.

4-amino-2-methyl-5-(diphosphooxymethyl)pyrimidine-binding positions include 36–40 and asparagine 68; that span reads QYRDK. Mg(2+)-binding residues include aspartate 69 and aspartate 87. A 4-amino-2-methyl-5-(diphosphooxymethyl)pyrimidine-binding site is contributed by threonine 106. 2-[(2R,5Z)-2-carboxy-4-methylthiazol-5(2H)-ylidene]ethyl phosphate is bound at residue 133 to 135; that stretch reads SST. Lysine 136 contributes to the 4-amino-2-methyl-5-(diphosphooxymethyl)pyrimidine binding site. A 2-[(2R,5Z)-2-carboxy-4-methylthiazol-5(2H)-ylidene]ethyl phosphate-binding site is contributed by glycine 163.

It belongs to the thiamine-phosphate synthase family. It depends on Mg(2+) as a cofactor.

It catalyses the reaction 2-[(2R,5Z)-2-carboxy-4-methylthiazol-5(2H)-ylidene]ethyl phosphate + 4-amino-2-methyl-5-(diphosphooxymethyl)pyrimidine + 2 H(+) = thiamine phosphate + CO2 + diphosphate. The catalysed reaction is 2-(2-carboxy-4-methylthiazol-5-yl)ethyl phosphate + 4-amino-2-methyl-5-(diphosphooxymethyl)pyrimidine + 2 H(+) = thiamine phosphate + CO2 + diphosphate. The enzyme catalyses 4-methyl-5-(2-phosphooxyethyl)-thiazole + 4-amino-2-methyl-5-(diphosphooxymethyl)pyrimidine + H(+) = thiamine phosphate + diphosphate. The protein operates within cofactor biosynthesis; thiamine diphosphate biosynthesis; thiamine phosphate from 4-amino-2-methyl-5-diphosphomethylpyrimidine and 4-methyl-5-(2-phosphoethyl)-thiazole: step 1/1. In terms of biological role, condenses 4-methyl-5-(beta-hydroxyethyl)thiazole monophosphate (THZ-P) and 2-methyl-4-amino-5-hydroxymethyl pyrimidine pyrophosphate (HMP-PP) to form thiamine monophosphate (TMP). This is Thiamine-phosphate synthase from Pseudomonas aeruginosa (strain UCBPP-PA14).